We begin with the raw amino-acid sequence, 336 residues long: Delta(1)-pyrroline-2-carboxylate reductase (336 aa).

Serine 47 acts as the Charge relay system in catalysis. Histidine 48 (proton donor) is an active-site residue. Residue arginine 52 coordinates substrate. 120 to 124 (HFSAL) is an NADP(+) binding site. Substrate is bound at residue threonine 160. 178 to 180 (DFA) is a binding site for NADP(+). Residue 186 to 187 (RG) coordinates substrate. Aspartate 188 serves as the catalytic Charge relay system. Residues 229–230 (HK) and 304–310 (RLPSQRR) each bind NADP(+).

Belongs to the LDH2/MDH2 oxidoreductase family. In terms of assembly, homodimer.

It carries out the reaction L-proline + NAD(+) = 1-pyrroline-2-carboxylate + NADH + H(+). The catalysed reaction is L-proline + NADP(+) = 1-pyrroline-2-carboxylate + NADPH + H(+). In terms of biological role, catalyzes the reduction of Delta(1)-pyrroline-2-carboxylate (Pyr2C) to L-proline, using NADPH as the electron donor. May be involved in a degradation pathway that converts trans-3-hydroxy-L-proline (t3LHyp) to L-proline. In Pseudomonas fluorescens (strain ATCC BAA-477 / NRRL B-23932 / Pf-5), this protein is Delta(1)-pyrroline-2-carboxylate reductase.